A 348-amino-acid polypeptide reads, in one-letter code: Protein-glutamate methylesterase/protein-glutamine glutaminase 2 (348 aa).

In terms of domain architecture, Response regulatory spans 5–122; sequence KVLIIDDSAL…DLGLSQYRDE (118 aa). Residue Asp56 is modified to 4-aspartylphosphate. In terms of domain architecture, CheB-type methylesterase spans 157 to 348; it reads SLKTGFLCAI…AANIIKHALK (192 aa). Catalysis depends on residues Ser169, His195, and Asp291.

The protein belongs to the CheB family. Post-translationally, phosphorylated by CheA. Phosphorylation of the N-terminal regulatory domain activates the methylesterase activity.

It is found in the cytoplasm. The catalysed reaction is [protein]-L-glutamate 5-O-methyl ester + H2O = L-glutamyl-[protein] + methanol + H(+). The enzyme catalyses L-glutaminyl-[protein] + H2O = L-glutamyl-[protein] + NH4(+). Involved in chemotaxis. Part of a chemotaxis signal transduction system that modulates chemotaxis in response to various stimuli. Catalyzes the demethylation of specific methylglutamate residues introduced into the chemoreceptors (methyl-accepting chemotaxis proteins or MCP) by CheR. Also mediates the irreversible deamidation of specific glutamine residues to glutamic acid. In Saccharophagus degradans (strain 2-40 / ATCC 43961 / DSM 17024), this protein is Protein-glutamate methylesterase/protein-glutamine glutaminase 2.